The sequence spans 283 residues: Urease accessory protein UreD 2 (283 aa).

Residues 1-11 (MGRRAPDRLDR) are compositionally biased toward basic and acidic residues. Residues 1–30 (MGRRAPDRLDRGVTTTSPRTQAPPQAGRGV) form a disordered region. Residues 13-23 (VTTTSPRTQAP) are compositionally biased toward polar residues.

The protein belongs to the UreD family. As to quaternary structure, ureD, UreF and UreG form a complex that acts as a GTP-hydrolysis-dependent molecular chaperone, activating the urease apoprotein by helping to assemble the nickel containing metallocenter of UreC. The UreE protein probably delivers the nickel.

It localises to the cytoplasm. In terms of biological role, required for maturation of urease via the functional incorporation of the urease nickel metallocenter. This chain is Urease accessory protein UreD 2, found in Saccharopolyspora erythraea (strain ATCC 11635 / DSM 40517 / JCM 4748 / NBRC 13426 / NCIMB 8594 / NRRL 2338).